A 162-amino-acid chain; its full sequence is Ubiquitin D (162 aa).

2 Ubiquitin-like domains span residues 3-78 (SVRT…LKVV) and 87-160 (LFLV…THCT).

The protein belongs to the ubiquitin D family. As to quaternary structure, interacts directly with the 26S proteasome. Interacts with NUB1; this interaction facilitates the linking of UBD-conjugated target protein to the proteasome complex and accelerates its own degradation and that of its conjugates. Interacts (via ubiquitin-like 1 domain) with the spindle checkpoint protein MAD2L1 during mitosis. Present in aggresomes of proteasome inhibited cells. Interacts with HDAC6 under proteasome impairment conditions. Forms a thioester with UBA6 in cells stimulated with tumor necrosis factor-alpha (TNFa) and interferon-gamma (IFNg). Interacts with SQSTM1 and TP53/p53. Can be acetylated. In terms of tissue distribution, mostly expressed in thymus and intestine.

It localises to the nucleus. It is found in the cytoplasm. In terms of biological role, ubiquitin-like protein modifier which can be covalently attached to target proteins and subsequently leads to their degradation by the 26S proteasome, in a NUB1-dependent manner. Conjugation to the target protein is activated by UBA6 via adenylation of its C-terminal glycine. Probably functions as a survival factor. Promotes the expression of the proteasome subunit beta type-9 (PSMB9/LMP2). Regulates TNF-alpha-induced and LPS-mediated activation of the central mediator of innate immunity NF-kappa-B by promoting TNF-alpha-mediated proteasomal degradation of ubiquitinated-I-kappa-B-alpha. Required for TNF-alpha-induced p65 nuclear translocation in renal tubular epithelial cells (RTECs). May be involved in dendritic cell (DC) maturation, the process by which immature dendritic cells differentiate into fully competent antigen-presenting cells that initiate T-cell responses. Mediates mitotic non-disjunction and chromosome instability, in long-term in vitro culture and cancers, by abbreviating mitotic phase and impairing the kinetochore localization of MAD2L1 during the prometaphase stage of the cell cycle. May be involved in the formation of aggresomes when proteasome is saturated or impaired. Mediates apoptosis in a caspase-dependent manner, especially in renal epithelium and tubular cells during renal diseases. This Mus musculus (Mouse) protein is Ubiquitin D (Ubd).